A 585-amino-acid polypeptide reads, in one-letter code: NADP-reducing hydrogenase subunit HndD (585 aa).

The 2Fe-2S ferredoxin-type domain occupies 2–85 (SMLTITIDGK…NMVVKTNSLR (84 aa)). Positions 36, 52, 55, and 69 each coordinate [2Fe-2S] cluster. The region spanning 85 to 124 (RVLNARRTVLELLLSDHPKDCLVCAKSGECELQTLAERFG) is the 4Fe-4S His(Cys)3-ligated-type domain. Residues His-101, Cys-105, Cys-108, and Cys-114 each contribute to the [4Fe-4S] cluster site. 2 consecutive 4Fe-4S ferredoxin-type domains span residues 144 to 174 (ASIIRDMDKCIMCRRCETMCNTVQTCGVLSG) and 185 to 216 (PAFEMNLADTVCTNCGQCVAVCPTGALVEHEY).

As to quaternary structure, heterotetramer composed of HndA, HndB, HndC and HndD subunits. HndD is probably the hydrogenase subunit. Requires [4Fe-4S] cluster as cofactor.

It catalyses the reaction H2 + NADP(+) = NADPH + H(+). With respect to regulation, inhibited by oxygen. Its function is as follows. Catalyzes the reduction of NADP in the presence of molecular H(2) to yield NADPH. In Solidesulfovibrio fructosivorans (Desulfovibrio fructosivorans), this protein is NADP-reducing hydrogenase subunit HndD (hndD).